The sequence spans 444 residues: MSTILESLPTGQKVGIAFSGGLDTSAALHWMKLKGAVPYAYTANLGQPDEDDYDAIPKRAIEYGAAGARLIDCRAQLVAEGIAALQSGAFHITTAGVTYFNTTPIGRAVTGTMLVAAMKEDGVNIWGDGSTYKGNDIERFYRYGLLVNPDLKIYKPWLDQTFIDELGGRAEMSEFMNQAGFAYKMSAEKAYSTDSNLLGATHEAKDLESLESGIKIVNPIMGVAFWRDDVKIAAEEVTVRFEAGQPVALNGVEFSDPVELLLEANRIGGRHGLGMSDQIENRIIEAKSRGIYEAPGLALLYIAYERLVTGIHNEDTIEQYRENGRRLGRLLYQGRWFDPQAIMLRETAQRWVARAITGEVKIELRRGNDYSILSTKSPNLTYQPERLSMEKVASTFSPRDRIGQLTMRNLDITDTRDKLRVYSQVGLLTPGETSALPQIKGDDK.

ATP contacts are provided by residues 17–25 (AFSGGLDTS) and Ala-43. Tyr-99 serves as a coordination point for L-citrulline. The ATP site is built by Gly-129 and Thr-131. The L-aspartate site is built by Thr-131, Asn-135, and Asp-136. Position 135 (Asn-135) interacts with L-citrulline. ATP is bound at residue Asp-136. Positions 139 and 192 each coordinate L-citrulline. ATP is bound at residue Asp-194. Residues Thr-201, Glu-203, and Glu-280 each contribute to the L-citrulline site.

This sequence belongs to the argininosuccinate synthase family. Type 2 subfamily. Homotetramer.

The protein localises to the cytoplasm. The catalysed reaction is L-citrulline + L-aspartate + ATP = 2-(N(omega)-L-arginino)succinate + AMP + diphosphate + H(+). It functions in the pathway amino-acid biosynthesis; L-arginine biosynthesis; L-arginine from L-ornithine and carbamoyl phosphate: step 2/3. The chain is Argininosuccinate synthase from Burkholderia lata (strain ATCC 17760 / DSM 23089 / LMG 22485 / NCIMB 9086 / R18194 / 383).